The following is a 640-amino-acid chain: Fructose-1,6-bisphosphatase class 3 (640 aa).

The protein belongs to the FBPase class 3 family. Requires Mn(2+) as cofactor.

It carries out the reaction beta-D-fructose 1,6-bisphosphate + H2O = beta-D-fructose 6-phosphate + phosphate. It participates in carbohydrate biosynthesis; gluconeogenesis. The polypeptide is Fructose-1,6-bisphosphatase class 3 (Lactococcus lactis subsp. cremoris (strain MG1363)).